The following is a 20-amino-acid chain: Beta-1,3-glucan-binding protein 2 (20 aa).

This sequence belongs to the insect beta-1,3-glucan binding protein family. Monomer.

The protein resides in the secreted. In terms of biological role, involved in the recognition of invading microorganisms causing their aggregation. Activates the phenoloxidase cascade. Binds specifically to beta-1,3-glucan. Binds the A.niger cell wall component alpha-1,3-glucan, a fungal pathogen-associated molecular pattern (PAMP) that activates the host immune response. The polypeptide is Beta-1,3-glucan-binding protein 2 (Galleria mellonella (Greater wax moth)).